A 1235-amino-acid polypeptide reads, in one-letter code: DNA polymerase catalytic subunit (1235 aa).

Disordered regions lie at residues 640–691 and 1098–1134; these read QGRF…ETAG and AAAPGDEPAPPAALPSPAKRPRETPSPADPPGGASKP. Residues 650 to 661 show a composition bias toward basic and acidic residues; that stretch reads APKRPAAAREDE. The segment covering 662–675 has biased composition (acidic residues); it reads ERPEEEGEDEDERE. Residues 676-691 show a composition bias toward basic and acidic residues; sequence EGGGEREPDGARETAG.

Belongs to the DNA polymerase type-B family. In terms of assembly, forms a complex with the ssDNA-binding protein UL29, the DNA polymerase processivity factor, and the alkaline exonuclease. Interacts with the putative helicase-primase complex subunit UL8; this interaction may coordinate leading and lagging strand DNA synthesis at the replication fork.

It localises to the host nucleus. It carries out the reaction DNA(n) + a 2'-deoxyribonucleoside 5'-triphosphate = DNA(n+1) + diphosphate. The catalysed reaction is Endonucleolytic cleavage to 5'-phosphomonoester.. Replicates viral genomic DNA. The replication complex is composed of six viral proteins: the DNA polymerase, processivity factor, primase, primase-associated factor, helicase, and ssDNA-binding protein. Additionally, the polymerase contains an intrinsic ribonuclease H (RNase H) activity that specifically degrades RNA/DNA heteroduplexes or duplex DNA substrates in the 5' to 3' direction. Therefore, it can catalyze the excision of the RNA primers that initiate the synthesis of Okazaki fragments at a replication fork during viral DNA replication. This chain is DNA polymerase catalytic subunit, found in Homo sapiens (Human).